We begin with the raw amino-acid sequence, 339 residues long: HTH-type transcriptional regulator PtxS (339 aa).

The region spanning 12-67 (VTISEVARVAGVSKATVSRYIGGDRQLLAEATAKRLEEVIERLGYRPNQMARGLKR) is the HTH lacI-type domain. A DNA-binding region (H-T-H motif) is located at residues 14–33 (ISEVARVAGVSKATVSRYIG).

In terms of assembly, homodimer in solution.

With respect to regulation, 2-ketogluconate acts as a molecular effector and causes dissociation of PtxS from its target promoter. In terms of biological role, negatively regulates glucose metabolism by binding directly to the promoter region of the kgu and gad operons. It also negatively regulates its own synthesis. The sequence is that of HTH-type transcriptional regulator PtxS from Pseudomonas putida (strain ATCC 47054 / DSM 6125 / CFBP 8728 / NCIMB 11950 / KT2440).